A 175-amino-acid chain; its full sequence is Co-chaperone protein daf-41 (175 aa).

Residues 2-89 form the CS domain; that stretch reads AKQPTVLWAQ…KTPAWWPRLL (88 aa). Residues 109–175 form a disordered region; the sequence is DEDDEAEDAG…EEEGKNGTRA (67 aa). The segment covering 148 to 168 has biased composition (acidic residues); sequence GLEDDEEDDDMPDLEDNEEEE.

The protein belongs to the p23/wos2 family. As to expression, expressed in anterior and posterior neurons including ASE, AWC, ASI and ADL amphids and phasmid sensory neurons, peripheral neurons and ventral cord motorneurons. Additionally expressed in body wall muscle, pharynx, vulva, germ cells and intestine.

Functionally, co-chaperone for hsp90/daf-21. Involved in regulation of longevity, larval entry and exit from the dauer stage of development and response to environmental cues, such as oxidative stress, in a temperature-dependent manner. Role in daf-16 and hsf-1 inhibition at elevated temperatures. This chain is Co-chaperone protein daf-41, found in Caenorhabditis elegans.